A 402-amino-acid chain; its full sequence is 1-deoxy-D-xylulose 5-phosphate reductoisomerase (402 aa).

Thr-21, Gly-22, Ser-23, Ile-24, Gly-47, Asn-50, and Asn-127 together coordinate NADPH. Lys-128 provides a ligand contact to 1-deoxy-D-xylulose 5-phosphate. Glu-129 is a binding site for NADPH. Residue Asp-151 participates in Mn(2+) binding. Residues Ser-152, Glu-153, Ser-177, and His-200 each coordinate 1-deoxy-D-xylulose 5-phosphate. Residue Glu-153 participates in Mn(2+) binding. Gly-206 contributes to the NADPH binding site. 1-deoxy-D-xylulose 5-phosphate-binding residues include Ser-213, Asn-218, Lys-219, and Glu-222. Residue Glu-222 coordinates Mn(2+).

The protein belongs to the DXR family. Mg(2+) is required as a cofactor. Requires Mn(2+) as cofactor.

The enzyme catalyses 2-C-methyl-D-erythritol 4-phosphate + NADP(+) = 1-deoxy-D-xylulose 5-phosphate + NADPH + H(+). The protein operates within isoprenoid biosynthesis; isopentenyl diphosphate biosynthesis via DXP pathway; isopentenyl diphosphate from 1-deoxy-D-xylulose 5-phosphate: step 1/6. Functionally, catalyzes the NADPH-dependent rearrangement and reduction of 1-deoxy-D-xylulose-5-phosphate (DXP) to 2-C-methyl-D-erythritol 4-phosphate (MEP). This is 1-deoxy-D-xylulose 5-phosphate reductoisomerase from Mycobacterium marinum (strain ATCC BAA-535 / M).